The chain runs to 63 residues: Large ribosomal subunit protein uL29 (63 aa).

This sequence belongs to the universal ribosomal protein uL29 family.

The sequence is that of Large ribosomal subunit protein uL29 from Vibrio cholerae serotype O1 (strain ATCC 39541 / Classical Ogawa 395 / O395).